Consider the following 875-residue polypeptide: Alanine--tRNA ligase (875 aa).

Residues His-565, His-569, Cys-666, and His-670 each coordinate Zn(2+).

Belongs to the class-II aminoacyl-tRNA synthetase family. Zn(2+) is required as a cofactor.

The protein localises to the cytoplasm. The catalysed reaction is tRNA(Ala) + L-alanine + ATP = L-alanyl-tRNA(Ala) + AMP + diphosphate. In terms of biological role, catalyzes the attachment of alanine to tRNA(Ala) in a two-step reaction: alanine is first activated by ATP to form Ala-AMP and then transferred to the acceptor end of tRNA(Ala). Also edits incorrectly charged Ser-tRNA(Ala) and Gly-tRNA(Ala) via its editing domain. The chain is Alanine--tRNA ligase from Methylibium petroleiphilum (strain ATCC BAA-1232 / LMG 22953 / PM1).